The primary structure comprises 543 residues: CTP synthase (543 aa).

The interval 1–265 is amidoligase domain; sequence MTRYIFVTGG…DDYVVERFGL (265 aa). S13 provides a ligand contact to CTP. S13 contacts UTP. ATP is bound by residues 14–19 and D71; that span reads SLGKGI. Residues D71 and E139 each coordinate Mg(2+). Residues 146–148, 186–191, and K222 contribute to the CTP site; these read DIE and KTKPTQ. UTP is bound by residues 186 to 191 and K222; that span reads KTKPTQ. The Glutamine amidotransferase type-1 domain occupies 290–541; the sequence is NIAMVGKYME…VNAALEYKAK (252 aa). Residue G351 coordinates L-glutamine. The Nucleophile; for glutamine hydrolysis role is filled by C378. L-glutamine contacts are provided by residues 379–382, E402, and R469; that span reads LGMQ. Residues H514 and E516 contribute to the active site.

The protein belongs to the CTP synthase family. Homotetramer.

The enzyme catalyses UTP + L-glutamine + ATP + H2O = CTP + L-glutamate + ADP + phosphate + 2 H(+). The catalysed reaction is L-glutamine + H2O = L-glutamate + NH4(+). It catalyses the reaction UTP + NH4(+) + ATP = CTP + ADP + phosphate + 2 H(+). Its pathway is pyrimidine metabolism; CTP biosynthesis via de novo pathway; CTP from UDP: step 2/2. With respect to regulation, allosterically activated by GTP, when glutamine is the substrate; GTP has no effect on the reaction when ammonia is the substrate. The allosteric effector GTP functions by stabilizing the protein conformation that binds the tetrahedral intermediate(s) formed during glutamine hydrolysis. Inhibited by the product CTP, via allosteric rather than competitive inhibition. Catalyzes the ATP-dependent amination of UTP to CTP with either L-glutamine or ammonia as the source of nitrogen. Regulates intracellular CTP levels through interactions with the four ribonucleotide triphosphates. In Stutzerimonas stutzeri (strain A1501) (Pseudomonas stutzeri), this protein is CTP synthase.